The chain runs to 181 residues: Ras-like protein 1 (181 aa).

Residue 10–17 participates in GTP binding; the sequence is GAGGVGKS. The short motif at 32–40 is the Effector region element; sequence YDPTIEDSY. GTP contacts are provided by residues 57-61 and 116-119; these read DTAGQ and NKCD. C178 is subject to Cysteine methyl ester. The S-geranylgeranyl cysteine moiety is linked to residue C178. The propeptide at 179 to 181 is removed in mature form; it reads KML.

It belongs to the small GTPase superfamily. Ras family.

The protein resides in the cell membrane. It catalyses the reaction GTP + H2O = GDP + phosphate + H(+). Its activity is regulated as follows. Alternates between an inactive form bound to GDP and an active form bound to GTP. Activated by a guanine nucleotide-exchange factor (GEF) and inactivated by a GTPase-activating protein (GAP). Ras proteins bind GDP/GTP and possess intrinsic GTPase activity. Plays a role in eye development by regulating cell growth, survival of postmitotic ommatidial cells and differentiation of photoreceptor cells. During larval development, mediates Ptth/tor signaling leading to the production of ecdysone, a hormone required for the initiation of metamorphosis. The polypeptide is Ras-like protein 1 (Drosophila mojavensis (Fruit fly)).